The primary structure comprises 1086 residues: DNA polymerase (1086 aa).

The tract at residues Ser638–Thr657 is disordered.

The protein belongs to the DNA polymerase type-B family.

It catalyses the reaction DNA(n) + a 2'-deoxyribonucleoside 5'-triphosphate = DNA(n+1) + diphosphate. Functionally, replicates the viral genome. Host DNA polymerases cannot substitute for the viral enzyme in this process. This chain is DNA polymerase, found in Noctuidae (owlet moths).